Consider the following 102-residue polypeptide: Monothiol glutaredoxin-S5 (102 aa).

The region spanning 1–101 (MENLQKMISE…PMLKRAGALW (101 aa)) is the Glutaredoxin domain. Residue C21 participates in [2Fe-2S] cluster binding. The Responsive for interaction with TGA factors signature appears at 99–102 (ALWL).

The protein belongs to the glutaredoxin family. CC-type subfamily.

It is found in the cytoplasm. It localises to the nucleus. Functionally, may only reduce GSH-thiol disulfides, but not protein disulfides. This Arabidopsis thaliana (Mouse-ear cress) protein is Monothiol glutaredoxin-S5 (GRXS5).